The primary structure comprises 931 residues: Neuropilin-2 (931 aa).

Positions 1 to 20 (MDMFPLTWVFLALYFSGHEV) are cleaved as a signal peptide. The Extracellular segment spans residues 21 to 864 (RSQQDPPCGG…EKSWLYTLDP (844 aa)). Cystine bridges form between cysteine 28–cysteine 55, cysteine 83–cysteine 105, and cysteine 149–cysteine 175. 2 CUB domains span residues 28–142 (CGGR…YEIF) and 149–267 (CSKN…YYLI). N-linked (GlcNAc...) asparagine glycosylation is found at asparagine 152 and asparagine 157. Glutamate 197, aspartate 211, and aspartate 252 together coordinate Ca(2+). An intrachain disulfide couples cysteine 208 to cysteine 230. Intrachain disulfides connect cysteine 277-cysteine 427 and cysteine 434-cysteine 592. 2 F5/8 type C domains span residues 277–427 (CNVP…LFGC) and 434–592 (CSNM…VLGC). Polar residues predominate over residues 298–310 (TFSDGRWTPQQSR). Positions 298–317 (TFSDGRWTPQQSRLHGDDNG) are disordered. Residues 601–621 (VETLGPTVKSEETTTPYPMDE) are disordered. Asparagine 629 is a glycosylation site (N-linked (GlcNAc...) asparagine). In terms of domain architecture, MAM spans 642–802 (SGFNCNFDFP…TDVPLENCME (161 aa)). A disordered region spans residues 819–854 (THGGEGYEDEIDDEYEGDWSNSSSSTSGAGDPSSGK). Residues 824–835 (GYEDEIDDEYEG) are compositionally biased toward acidic residues. Positions 836-851 (DWSNSSSSTSGAGDPS) are enriched in low complexity. A glycan (N-linked (GlcNAc...) asparagine) is linked at asparagine 839. A helical transmembrane segment spans residues 865 to 889 (ILITIIAMSSLGVLLGATCAGLLLY). The Cytoplasmic segment spans residues 890–931 (CTCSYSGLSSRSCTTLENYNFELYDGLKHKVKINHQKCCSEA).

Belongs to the neuropilin family. As to quaternary structure, heterodimer with NRP1. Binds PLXNB1. Expressed in developing CNS, PNS and in some nonneural tissues including limb buds, developing bones, muscles, intestinal epithelium, kidney, lung and submandibular gland.

It is found in the membrane. In terms of biological role, high affinity receptor for semaphorins 3C, 3F, VEGF-165 and VEGF-145 isoforms of VEGF, and the PLGF-2 isoform of PGF. The chain is Neuropilin-2 (Nrp2) from Mus musculus (Mouse).